Consider the following 249-residue polypeptide: Triosephosphate isomerase (249 aa).

Substrate is bound by residues Asn12 and Lys14. Lys14 carries the N6-acetyllysine modification. Tyr68 carries the post-translational modification 3'-nitrotyrosine. Ser80 bears the Phosphoserine mark. His96 functions as the Electrophile in the catalytic mechanism. Ser106 bears the Phosphoserine mark. Lys142 participates in a covalent cross-link: Glycyl lysine isopeptide (Lys-Gly) (interchain with G-Cter in SUMO1). N6-succinyllysine is present on Lys149. Lys156 is modified (N6-acetyllysine; alternate). Lys156 is modified (N6-succinyllysine; alternate). Ser159 is modified (phosphoserine). Glu166 acts as the Proton acceptor in catalysis. Residue Thr173 is modified to Phosphothreonine. Lys194 is subject to N6-acetyllysine; alternate. Lys194 is modified (N6-succinyllysine; alternate). Lys194 bears the N6-methyllysine; alternate mark. Ser198 bears the Phosphoserine mark. Tyr209 is modified (3'-nitrotyrosine). Ser212 carries the post-translational modification Phosphoserine. Thr214 is modified (phosphothreonine). Ser223 bears the Phosphoserine mark. The residue at position 238 (Lys238) is an N6-acetyllysine.

It belongs to the triosephosphate isomerase family. In terms of assembly, homodimer.

The protein resides in the cytoplasm. The enzyme catalyses dihydroxyacetone phosphate = methylglyoxal + phosphate. The catalysed reaction is D-glyceraldehyde 3-phosphate = dihydroxyacetone phosphate. It functions in the pathway carbohydrate degradation; glycolysis; D-glyceraldehyde 3-phosphate from glycerone phosphate: step 1/1. Its pathway is carbohydrate biosynthesis; gluconeogenesis. Its function is as follows. Triosephosphate isomerase is an extremely efficient metabolic enzyme that catalyzes the interconversion between dihydroxyacetone phosphate (DHAP) and D-glyceraldehyde-3-phosphate (G3P) in glycolysis and gluconeogenesis. It is also responsible for the non-negligible production of methylglyoxal a reactive cytotoxic side-product that modifies and can alter proteins, DNA and lipids. The chain is Triosephosphate isomerase (TPI1) from Canis lupus familiaris (Dog).